The chain runs to 181 residues: Transcription termination/antitermination protein NusG (181 aa).

The region spanning 130–161 is the KOW domain; sequence PGEMIRVNDGPFADFNGVVEEVDYEKSRLKVS.

Belongs to the NusG family. In terms of assembly, monomer. Interacts with the transcription termination factor Rho and with RNA polymerase.

Participates in transcription elongation, termination and antitermination. In the absence of Rho, increases the rate of transcription elongation by the RNA polymerase (RNAP), probably by partially suppressing pausing. In the presence of Rho, modulates most Rho-dependent termination events by interacting with the RNAP to render the complex more susceptible to the termination activity of Rho. May be required to overcome a kinetic limitation of Rho to function at certain terminators. Also involved in ribosomal RNA transcriptional antitermination. The polypeptide is Transcription termination/antitermination protein NusG (Buchnera aphidicola subsp. Acyrthosiphon pisum (strain APS) (Acyrthosiphon pisum symbiotic bacterium)).